We begin with the raw amino-acid sequence, 150 residues long: Holo-[acyl-carrier-protein] synthase (150 aa).

Residues Asp8 and Glu57 each contribute to the Mg(2+) site.

This sequence belongs to the P-Pant transferase superfamily. AcpS family. The cofactor is Mg(2+).

Its subcellular location is the cytoplasm. It catalyses the reaction apo-[ACP] + CoA = holo-[ACP] + adenosine 3',5'-bisphosphate + H(+). Functionally, transfers the 4'-phosphopantetheine moiety from coenzyme A to a Ser of acyl-carrier-protein. This Jannaschia sp. (strain CCS1) protein is Holo-[acyl-carrier-protein] synthase.